Reading from the N-terminus, the 192-residue chain is uncharacterized protein (192 aa).

The Nudix hydrolase domain occupies 29-160; that stretch reads QRQAAVLVPI…PLDIHRRGND (132 aa). The Nudix box motif lies at 67–89; it reads GAVDNTDATLIAAALREAQEEVA. Residues glutamate 83 and glutamate 87 each contribute to the Mg(2+) site.

Belongs to the Nudix hydrolase family. PCD1 subfamily. It depends on Mn(2+) as a cofactor. Mg(2+) is required as a cofactor.

In terms of biological role, probably mediates the hydrolysis of some nucleoside diphosphate derivatives. This is an uncharacterized protein from Klebsiella pneumoniae subsp. pneumoniae (strain ATCC 700721 / MGH 78578).